A 201-amino-acid chain; its full sequence is Adenylyl-sulfate kinase (201 aa).

35–42 is an ATP binding site; it reads GLSGSGKS. Serine 109 acts as the Phosphoserine intermediate in catalysis.

It belongs to the APS kinase family.

It catalyses the reaction adenosine 5'-phosphosulfate + ATP = 3'-phosphoadenylyl sulfate + ADP + H(+). Its pathway is sulfur metabolism; hydrogen sulfide biosynthesis; sulfite from sulfate: step 2/3. Functionally, catalyzes the synthesis of activated sulfate. The chain is Adenylyl-sulfate kinase from Escherichia coli O139:H28 (strain E24377A / ETEC).